The following is a 366-amino-acid chain: tRNA/tmRNA (uracil-C(5))-methyltransferase (366 aa).

The S-adenosyl-L-methionine site is built by Gln187, Tyr215, Asn220, Glu236, and Asp297. The Nucleophile role is filled by Cys322. Catalysis depends on Glu356, which acts as the Proton acceptor.

The protein belongs to the class I-like SAM-binding methyltransferase superfamily. RNA M5U methyltransferase family. TrmA subfamily.

It carries out the reaction uridine(54) in tRNA + S-adenosyl-L-methionine = 5-methyluridine(54) in tRNA + S-adenosyl-L-homocysteine + H(+). It catalyses the reaction uridine(341) in tmRNA + S-adenosyl-L-methionine = 5-methyluridine(341) in tmRNA + S-adenosyl-L-homocysteine + H(+). Its function is as follows. Dual-specificity methyltransferase that catalyzes the formation of 5-methyluridine at position 54 (m5U54) in all tRNAs, and that of position 341 (m5U341) in tmRNA (transfer-mRNA). The sequence is that of tRNA/tmRNA (uracil-C(5))-methyltransferase from Marinomonas sp. (strain MWYL1).